A 229-amino-acid polypeptide reads, in one-letter code: Enolase-phosphatase E1 (229 aa).

Residues 208–218 show a composition bias toward polar residues; that stretch reads DTQSTHRQVSS. Residues 208–229 are disordered; the sequence is DTQSTHRQVSSFDDIHPEQIPT. Over residues 220 to 229 the composition is skewed to basic and acidic residues; it reads DDIHPEQIPT.

Belongs to the HAD-like hydrolase superfamily. MasA/MtnC family. As to quaternary structure, monomer. Requires Mg(2+) as cofactor.

The enzyme catalyses 5-methylsulfanyl-2,3-dioxopentyl phosphate + H2O = 1,2-dihydroxy-5-(methylsulfanyl)pent-1-en-3-one + phosphate. It participates in amino-acid biosynthesis; L-methionine biosynthesis via salvage pathway; L-methionine from S-methyl-5-thio-alpha-D-ribose 1-phosphate: step 3/6. It functions in the pathway amino-acid biosynthesis; L-methionine biosynthesis via salvage pathway; L-methionine from S-methyl-5-thio-alpha-D-ribose 1-phosphate: step 4/6. Its function is as follows. Bifunctional enzyme that catalyzes the enolization of 2,3-diketo-5-methylthiopentyl-1-phosphate (DK-MTP-1-P) into the intermediate 2-hydroxy-3-keto-5-methylthiopentenyl-1-phosphate (HK-MTPenyl-1-P), which is then dephosphorylated to form the acireductone 1,2-dihydroxy-3-keto-5-methylthiopentene (DHK-MTPene). This chain is Enolase-phosphatase E1, found in Cronobacter sakazakii (Enterobacter sakazakii).